Here is a 263-residue protein sequence, read N- to C-terminus: HTH-type transcriptional repressor NanR (263 aa).

Residues 1–21 (MGLMNAFDSQTEDSSPVIGRN) are disordered. The HTH gntR-type domain maps to 30–98 (KKLSEMVEEE…NGERARVSRP (69 aa)). The H-T-H motif DNA-binding region spans 58–77 (ERELMAFFNVGRPSVREALA).

The protein belongs to the NanR family.

Functionally, transcriptional repressor that controls expression of the genes required for the catabolism of sialic acids. The chain is HTH-type transcriptional repressor NanR from Escherichia coli O7:K1 (strain IAI39 / ExPEC).